The primary structure comprises 124 residues: MATVNQLVRKPRTPKVEKTNVPALNACPQKRGVCTRVYTTTPKKPNSALRKVARVRLTNGFEVTSYIGGEGHNLQEHSVILIRGGRVKDLPGVRYHTVRGALDCAGVTSRRQGRSKYGAKRPKS.

The residue at position 89 (aspartate 89) is a 3-methylthioaspartic acid.

This sequence belongs to the universal ribosomal protein uS12 family. In terms of assembly, part of the 30S ribosomal subunit. Contacts proteins S8 and S17. May interact with IF1 in the 30S initiation complex.

Its function is as follows. With S4 and S5 plays an important role in translational accuracy. Functionally, interacts with and stabilizes bases of the 16S rRNA that are involved in tRNA selection in the A site and with the mRNA backbone. Located at the interface of the 30S and 50S subunits, it traverses the body of the 30S subunit contacting proteins on the other side and probably holding the rRNA structure together. The combined cluster of proteins S8, S12 and S17 appears to hold together the shoulder and platform of the 30S subunit. This is Small ribosomal subunit protein uS12 from Shewanella frigidimarina (strain NCIMB 400).